Consider the following 576-residue polypeptide: uncharacterized protein (576 aa).

The interval 41–78 (EKESESKLNSKSTTLQSSDSEDWDSEENEDDITDVGVP) is disordered. The segment covering 49–58 (NSKSTTLQSS) has biased composition (low complexity). The span at 59-73 (DSEDWDSEENEDDIT) shows a compositional bias: acidic residues. WD repeat units follow at residues 87 to 126 (GHSK…ATNP), 195 to 235 (GHIA…SQLE), 248 to 288 (LSRI…KRPV), 296 to 335 (LPQQ…KCVN), and 393 to 433 (TVTA…RGVK). Residues 547–576 (SETQPTPIYQGVTEGDISSEEGNPSKKQKR) form a disordered region.

This is an uncharacterized protein from Schizosaccharomyces pombe (strain 972 / ATCC 24843) (Fission yeast).